A 402-amino-acid polypeptide reads, in one-letter code: Putative F-box protein At3g20030 (402 aa).

Residues 1–56 form the F-box domain; sequence MTMMSDLSQDLLEEILSRVPRTSLGAVRSTCKRWNTLFKDRILCKAEETRDQFRFI.

This is Putative F-box protein At3g20030 from Arabidopsis thaliana (Mouse-ear cress).